The following is a 356-amino-acid chain: Protein pelota homolog (356 aa).

It belongs to the eukaryotic release factor 1 family. Pelota subfamily. As to quaternary structure, monomer. Requires a divalent metal cation as cofactor.

It is found in the cytoplasm. Its function is as follows. May function in recognizing stalled ribosomes, interact with stem-loop structures in stalled mRNA molecules, and effect endonucleolytic cleavage of the mRNA. May play a role in the release non-functional ribosomes and degradation of damaged mRNAs. Has endoribonuclease activity. The sequence is that of Protein pelota homolog from Pyrococcus abyssi (strain GE5 / Orsay).